Consider the following 411-residue polypeptide: Serine--tRNA ligase (411 aa).

Residue 226 to 228 participates in L-serine binding; that stretch reads TSE. Residue 257–259 participates in ATP binding; it reads RQE. Position 280 (Glu280) interacts with L-serine. 344–347 lines the ATP pocket; the sequence is EISS. Ser379 provides a ligand contact to L-serine.

It belongs to the class-II aminoacyl-tRNA synthetase family. Type-1 seryl-tRNA synthetase subfamily. As to quaternary structure, homodimer. The tRNA molecule binds across the dimer.

The protein localises to the cytoplasm. It catalyses the reaction tRNA(Ser) + L-serine + ATP = L-seryl-tRNA(Ser) + AMP + diphosphate + H(+). It carries out the reaction tRNA(Sec) + L-serine + ATP = L-seryl-tRNA(Sec) + AMP + diphosphate + H(+). It functions in the pathway aminoacyl-tRNA biosynthesis; selenocysteinyl-tRNA(Sec) biosynthesis; L-seryl-tRNA(Sec) from L-serine and tRNA(Sec): step 1/1. Catalyzes the attachment of serine to tRNA(Ser). Is also able to aminoacylate tRNA(Sec) with serine, to form the misacylated tRNA L-seryl-tRNA(Sec), which will be further converted into selenocysteinyl-tRNA(Sec). The protein is Serine--tRNA ligase of Campylobacter lari (strain RM2100 / D67 / ATCC BAA-1060).